A 395-amino-acid chain; its full sequence is MAPVPVSVSATLAPPPAAPPKTTSRSWERRAPADAAFAAASSVAGSAALLTLTPAAPAAALSKEDVAGSLTKAVDTVSQAIDVGGKAAEQVAAVLKALGEAVKPALPVLKSASDEALKLAAPVVSAASKQATEALQGAGVDPAPVLSVAKTAAEQSTKVIDAAKPVASAAVETITSLGPEDYVVAAGXAFLAYLLVPPVWSLVSSSLRGYKGDLTPAQALDKVTTQGYVLIDVRSEKDKAKAGLPQLPSNAKNKLVSVPLEDLPSKLKGMVRNAKKAEAEIAALKISYLKKIGKGSNVIIMDSYSDVAKTVAKTLDSVGFKNCWVMAGGFSGRKGWAQSRLGTDSYNLSVVEVVTPSRVIPAVAGRRTGTTAARIGTASSASRATTRKLLPGGVD.

Low complexity predominate over residues 1–12 (MAPVPVSVSATL). The disordered stretch occupies residues 1–27 (MAPVPVSVSATLAPPPAAPPKTTSRSW). The N-terminal 39 residues, 1-39 (MAPVPVSVSATLAPPPAAPPKTTSRSWERRAPADAAFAA), are a transit peptide targeting the chloroplast. The Lumenal, thylakoid segment spans residues 40–182 (ASSVAGSAAL…TITSLGPEDY (143 aa)). A helical transmembrane segment spans residues 183–203 (VVAAGXAFLAYLLVPPVWSLV). Residues 204–395 (SSSLRGYKGD…TRKLLPGGVD (192 aa)) lie on the Stromal side of the membrane. In terms of domain architecture, Rhodanese spans 224–345 (TTQGYVLIDV…WAQSRLGTDS (122 aa)). Threonine 377 is subject to Phosphothreonine.

Post-translationally, phosphorylated in both bundle sheath and mesophyll cells, under both low and high light regimes (70 vs 900 umol photons/m-2/s).

It is found in the plastid. The protein localises to the chloroplast thylakoid membrane. Its function is as follows. Modulates cytoplasmic Ca(2+) concentration and is crucial for proper stomatal regulation in response to elevated levels of external Ca(2+). May function by regulating concentrations of inositol 1,4,5-trisphosphate (IP3), which in turn triggers release of Ca(2+) from internal stores. May play a role in de-etiolation. The protein is Calcium sensing receptor, chloroplastic of Zea mays (Maize).